The following is a 285-amino-acid chain: MNAHQSSLPAQTKRTAHIAFSKAPSGASYVSRQEVGYPFHLGRTLTLPQDPPGMAAVYLQSCSGGLFAGEQLHLHLHAGPGTQVHVSTGAATVAHSMLEQSARQTVTLVAEADALLEYLPMATILFPQTRLHSQVNVTLHPGARVLLCDAFCLHTPHGSEGLPDFYRADLQVYSPAGKLLAGDRLAITGADLQRRLPGVSGQRQALATFMLVGQGLPIEDLKRTLRETLRDVADSYQGVSALPNDCGVSVRVMSADAVALRNALHLAWACVRQQLTGLAPRVRRK.

This sequence belongs to the UreD family. In terms of assembly, ureD, UreF and UreG form a complex that acts as a GTP-hydrolysis-dependent molecular chaperone, activating the urease apoprotein by helping to assemble the nickel containing metallocenter of UreC. The UreE protein probably delivers the nickel.

It is found in the cytoplasm. Its function is as follows. Required for maturation of urease via the functional incorporation of the urease nickel metallocenter. The polypeptide is Urease accessory protein UreD 1 (Pseudomonas syringae pv. syringae (strain B728a)).